We begin with the raw amino-acid sequence, 697 residues long: Elongation factor G (697 aa).

The tr-type G domain maps to 8-282 (EDYRNIGIMA…AVVDYLPSPL (275 aa)). GTP-binding positions include 17 to 24 (AHIDAGKT), 81 to 85 (DTPGH), and 135 to 138 (NKMD).

It belongs to the TRAFAC class translation factor GTPase superfamily. Classic translation factor GTPase family. EF-G/EF-2 subfamily.

It localises to the cytoplasm. In terms of biological role, catalyzes the GTP-dependent ribosomal translocation step during translation elongation. During this step, the ribosome changes from the pre-translocational (PRE) to the post-translocational (POST) state as the newly formed A-site-bound peptidyl-tRNA and P-site-bound deacylated tRNA move to the P and E sites, respectively. Catalyzes the coordinated movement of the two tRNA molecules, the mRNA and conformational changes in the ribosome. The polypeptide is Elongation factor G (Mycoplasmopsis agalactiae (strain NCTC 10123 / CIP 59.7 / PG2) (Mycoplasma agalactiae)).